The following is a 244-amino-acid chain: Probable transcriptional regulatory protein MMOB1910 (244 aa).

The protein belongs to the TACO1 family.

The protein resides in the cytoplasm. This chain is Probable transcriptional regulatory protein MMOB1910, found in Mycoplasma mobile (strain ATCC 43663 / 163K / NCTC 11711) (Mesomycoplasma mobile).